Here is a 75-residue protein sequence, read N- to C-terminus: Large ribosomal subunit protein bL31 (75 aa).

Positions 16, 18, 38, and 41 each coordinate Zn(2+).

The protein belongs to the bacterial ribosomal protein bL31 family. Type A subfamily. As to quaternary structure, part of the 50S ribosomal subunit. Zn(2+) is required as a cofactor.

In terms of biological role, binds the 23S rRNA. This is Large ribosomal subunit protein bL31 from Nocardioides sp. (strain ATCC BAA-499 / JS614).